A 207-amino-acid polypeptide reads, in one-letter code: Large ribosomal subunit protein uL3 (207 aa).

The tract at residues 113 to 148 (KGKGFQGPIKRHGQSRGPMAHGSRYHRRPGSMGPVA) is disordered.

It belongs to the universal ribosomal protein uL3 family. As to quaternary structure, part of the 50S ribosomal subunit. Forms a cluster with proteins L14 and L19.

One of the primary rRNA binding proteins, it binds directly near the 3'-end of the 23S rRNA, where it nucleates assembly of the 50S subunit. This is Large ribosomal subunit protein uL3 from Lactococcus lactis subsp. lactis (strain IL1403) (Streptococcus lactis).